The chain runs to 238 residues: RxLR effector protein PITG_14788 (238 aa).

The N-terminal stretch at 1–23 (MKSLHAVNLVLLLLLACFAPAPA) is a signal peptide. Residues 47 to 65 (RLLRAHSSGKEEQKEEEER) carry the RxLR-dEER motif.

It belongs to the RxLR effector family.

Its subcellular location is the secreted. It is found in the host cytoplasm. The protein localises to the host cytoskeleton. The protein resides in the host nucleus. It localises to the host nucleolus. Effector that enhances P.infestans colonization of Nicotiana benthamiana leaves. This is RxLR effector protein PITG_14788 from Phytophthora infestans (strain T30-4) (Potato late blight agent).